We begin with the raw amino-acid sequence, 461 residues long: Histone acetyltransferase KAT5 (461 aa).

The region spanning isoleucine 8–leucine 65 is the Tudor-knot domain. Lysine 52 bears the N6-acetyllysine mark. The segment at phenylalanine 70–arginine 168 is disordered. Phosphoserine is present on residues serine 86 and serine 90. Over residues serine 90–glutamate 100 the composition is skewed to basic and acidic residues. N6-acetyllysine; by autocatalysis occurs at positions 96, 98, 135, and 137. Serine 147 carries the phosphoserine modification. Residues threonine 175–proline 452 enclose the MYST-type HAT domain. The C2HC MYST-type zinc-finger motif lies at leucine 208 to leucine 233. N6-acetyllysine; by autocatalysis is present on lysine 275. The segment at alanine 316–tryptophan 461 is interaction with ATF2. Residues isoleucine 318–threonine 320 and glutamine 325–lysine 331 contribute to the acetyl-CoA site. Glutamate 351 (proton donor/acceptor) is an active-site residue. Acetyl-CoA-binding residues include serine 355 and serine 364. Residue lysine 378 forms a Glycyl lysine isopeptide (Lys-Gly) (interchain with G-Cter in SUMO1); alternate linkage. Lysine 378 participates in a covalent cross-link: Glycyl lysine isopeptide (Lys-Gly) (interchain with G-Cter in SUMO2); alternate. Lysine 399 participates in a covalent cross-link: Glycyl lysine isopeptide (Lys-Gly) (interchain with G-Cter in SUMO1).

This sequence belongs to the MYST (SAS/MOZ) family. Component of the NuA4 histone acetyltransferase complex which contains the catalytic subunit KAT5/TIP60 and the subunits EP400, TRRAP/PAF400, BRD8/SMAP, EPC1, DMAP1/DNMAP1, RUVBL1/TIP49, RUVBL2, ING3, actin, ACTL6A/BAF53A, MORF4L1/MRG15, MORF4L2/MRGX, MRGBP, YEATS4/GAS41, VPS72/YL1 and MEAF6. KAT5/TIP60, EPC1, and ING3 together constitute a minimal HAT complex termed Piccolo NuA4. The NuA4 complex interacts with MYC. Interacts with ATM. Interacts with JADE1. Interacts with PLA2G4A/CPLA2, EDNRA and HDAC7. Interacts with the cytoplasmic tail of APP and APBB1/FE65. Interacts with TRIM24 and TRIM68. Forms a complex with SENP6 and UBE2I in response to UV irradiation. Identified in a complex with HINT1. Interacts with ATF2 and CUL3. Interacts with NR1D2 (via N-terminus). Component of a SWR1-like complex. Interacts with FOXP3. Interacts with ZBTB49. Interacts with SRF. Interacts with ATF3; promoting autoacetylation and deubiquitination by USP7. Interacts with EP300/p300; interaction promotes KAT5 autoacetylation. Interacts with PRKDC; interaction is impaired following KAT5 sumoylation. Interacts with GPR50. Phosphorylated on Ser-86 and Ser-90; enhanced during G2/M phase. The phosphorylated form has a higher activity. Phosphorylation at Ser-90 by CDK1 or CDK9 is a prerequisite for phosphorylation at Ser-86 by GSK3. Phosphorylation at Ser-86 by GSK3 (GSK3A or GSK3B) activates acetyltransferase and acyltransferase activities. Phosphorylation at Ser-90 by CDK9 promotes KAT5 recruitment to chromatin. Phosphorylation by VRK1 following DNA damage promotes KAT5 association with chromatin and histone acetyltransferase activity. In terms of processing, autoacetylated. Autoacetylation is required for histone acetyltransferase activity. Autoacetylation at Lys-275 is facilitated by interaction with EP300/p300: it prevents ubiquitination and subsequent degradation by the proteasome and promotes acetylation of target proteins. Deacetylated by HDAC3 and SIRT1. Deacetylation by HDAC3 promotes its ubiquitination and cytoplasmic localization. Post-translationally, sumoylated by UBE2I at Lys-378 and Lys-399, leading to increase of its histone acetyltransferase activity in UV-induced DNA damage response, as well as its translocation to nuclear bodies. Sumoylation with SUMO2 by PIAS4 at Lys-378 promotes repair of DNA double-strand breaks (DSBs) via homologous recombination (HR). Sumoylation by PIAS4 impairs interaction with PRKDC, inhibiting non-homologous end joining (NHEJ)-mediated repair of DSBs, thereby facilitating HR. Desumoylated by SENP3. Ubiquitinated by MDM2, leading to its proteasome-dependent degradation. Ubiquitination is prevented by autoacetylation at Lys-275. Ubiquitinated following deacetylation by HDAC3, leading to cytoplasmic localization. Deubiquitinated by USP7 following interaction with ATF3, promoting its stabilization.

The protein localises to the nucleus. It is found in the chromosome. The protein resides in the cytoplasm. It localises to the centromere. Its subcellular location is the kinetochore. The protein localises to the cytoskeleton. It is found in the spindle pole. The protein resides in the nucleolus. It localises to the perinuclear region. The catalysed reaction is L-lysyl-[histone] + acetyl-CoA = N(6)-acetyl-L-lysyl-[histone] + CoA + H(+). It catalyses the reaction L-lysyl-[protein] + acetyl-CoA = N(6)-acetyl-L-lysyl-[protein] + CoA + H(+). It carries out the reaction (2E)-butenoyl-CoA + L-lysyl-[protein] = N(6)-(2E)-butenoyl-L-lysyl-[protein] + CoA + H(+). The enzyme catalyses 2-hydroxyisobutanoyl-CoA + L-lysyl-[protein] = N(6)-(2-hydroxyisobutanoyl)-L-lysyl-[protein] + CoA + H(+). The catalysed reaction is (S)-lactoyl-CoA + L-lysyl-[protein] = N(6)-[(S)-lactoyl]-L-lysyl-[protein] + CoA + H(+). Its activity is regulated as follows. Acyltransferase and acetyltransferase activities are activated by phosphorylation and autoacetylation. Autoacetylation activates the histone acetyltransferase activity. Its function is as follows. Catalytic subunit of the NuA4 histone acetyltransferase complex, a multiprotein complex involved in transcriptional activation of select genes principally by acetylation of nucleosomal histones H2A and H4. Histone acetylation alters nucleosome-DNA interactions and promotes interaction of the modified histones with other proteins which positively regulate transcription. The NuA4 histone acetyltransferase complex is required for the activation of transcriptional programs associated with proto-oncogene mediated growth induction, tumor suppressor mediated growth arrest and replicative senescence, apoptosis, and DNA repair. The NuA4 complex plays a direct role in repair of DNA double-strand breaks (DSBs) by promoting homologous recombination (HR): the complex inhibits TP53BP1 binding to chromatin via MBTD1, which recognizes and binds histone H4 trimethylated at 'Lys-20' (H4K20me), and KAT5 that catalyzes acetylation of 'Lys-15' of histone H2A (H2AK15ac), thereby blocking the ubiquitination mark required for TP53BP1 localization at DNA breaks. Also involved in DSB repair by mediating acetylation of 'Lys-5' of histone H2AX (H2AXK5ac), promoting NBN/NBS1 assembly at the sites of DNA damage. The NuA4 complex plays a key role in hematopoietic stem cell maintenance and is required to maintain acetylated H2A.Z/H2AZ1 at MYC target genes. The NuA4 complex is also required for spermatid development by promoting acetylation of histones: histone hyperacetylation is required for histone replacement during the transition from round to elongating spermatids. Component of a SWR1-like complex that specifically mediates the removal of histone H2A.Z/H2AZ1 from the nucleosome. Also acetylates non-histone proteins, such as BMAL1, ATM, AURKB, CHKA, CGAS, ERCC4/XPF, LPIN1, TP53/p53, NDC80/HEC1, NR1D2, RAN, SOX4, FOXP3, SQSTM1, ULK1 and RUBCNL/Pacer. Directly acetylates and activates ATM. Promotes nucleotide excision repair (NER) by mediating acetylation of ERCC4/XPF, thereby promoting formation of the ERCC4-ERCC1 complex. Relieves NR1D2-mediated inhibition of APOC3 expression by acetylating NR1D2. Acts as a regulator of regulatory T-cells (Treg) by catalyzing FOXP3 acetylation, thereby promoting FOXP3 transcriptional repressor activity. Involved in skeletal myoblast differentiation by mediating acetylation of SOX4. Catalyzes acetylation of APBB1/FE65, increasing its transcription activator activity. Promotes transcription elongation during the activation phase of the circadian cycle by catalyzing acetylation of BMAL1, promoting elongation of circadian transcripts. Together with GSK3 (GSK3A or GSK3B), acts as a regulator of autophagy: phosphorylated at Ser-86 by GSK3 under starvation conditions, leading to activate acetyltransferase activity and promote acetylation of key autophagy regulators, such as ULK1 and RUBCNL/Pacer. Acts as a regulator of the cGAS-STING innate antiviral response by catalyzing acetylation the N-terminus of CGAS, thereby promoting CGAS DNA-binding and activation. Also regulates lipid metabolism by mediating acetylation of CHKA or LPIN1. Promotes lipolysis of lipid droplets following glucose deprivation by mediating acetylation of isoform 1 of CHKA, thereby promoting monomerization of CHKA and its conversion into a tyrosine-protein kinase. Acts as a regulator of fatty-acid-induced triacylglycerol synthesis by catalyzing acetylation of LPIN1, thereby promoting the synthesis of diacylglycerol. In addition to protein acetyltransferase, can use different acyl-CoA substrates, such as (2E)-butenoyl-CoA (crotonyl-CoA), S-lactoyl-CoA (lactyl-CoA) and 2-hydroxyisobutanoyl-CoA (2-hydroxyisobutyryl-CoA), and is able to mediate protein crotonylation, lactylation and 2-hydroxyisobutyrylation, respectively. Acts as a key regulator of chromosome segregation and kinetochore-microtubule attachment during mitosis by mediating acetylation or crotonylation of target proteins. Catalyzes acetylation of AURKB at kinetochores, increasing AURKB activity and promoting accurate chromosome segregation in mitosis. Acetylates RAN during mitosis, promoting microtubule assembly at mitotic chromosomes. Acetylates NDC80/HEC1 during mitosis, promoting robust kinetochore-microtubule attachment. Catalyzes crotonylation of MAPRE1/EB1, thereby ensuring accurate spindle positioning in mitosis. Catalyzes lactylation of NBN/NBS1 in response to DNA damage, thereby promoting DNA double-strand breaks (DSBs) via homologous recombination (HR). The protein is Histone acetyltransferase KAT5 of Pongo abelii (Sumatran orangutan).